Reading from the N-terminus, the 330-residue chain is GDP-mannose transporter (330 aa).

Residues 1–13 (MSQLKVDNGPLSH) lie on the Cytoplasmic side of the membrane. A helical membrane pass occupies residues 14–34 (VANSGPISIGAYCFSSIMMTV). Residues 35 to 48 (TNKFVVNLKGFNMN) are Lumenal-facing. The chain crosses the membrane as a helical span at residues 49–69 (FVMLFVQAAVCVNLLFFLRLL). The Cytoplasmic portion of the chain corresponds to 70–81 (GYAKFRPLNRTD). The chain crosses the membrane as a helical span at residues 82–98 (AKNWFPITIFLVLMIYT). At 99-104 (SSKSLQ) the chain is on the lumenal side. The chain crosses the membrane as a helical span at residues 105–124 (YLAVPIYTIFKNLTIILIAY). Residues 125–138 (GEVLFFGGSVTAME) lie on the Cytoplasmic side of the membrane. A helical membrane pass occupies residues 139-155 (LSSFLLMVLSSVVATLG). Topologically, residues 156 to 170 (DQQALKKTADAGASL) are lumenal. A helical transmembrane segment spans residues 171–191 (FNIGYMWMFINCLSSAAFVLV). Topologically, residues 192–203 (MRKRIKLTNFKD) are cytoplasmic. A helical membrane pass occupies residues 204–224 (FDTMFYNNILSMPVLLALSFL). Residues 225 to 241 (MEDWSTENLTKNLSRDS) lie on the Lumenal side of the membrane. The chain crosses the membrane as a helical span at residues 242-262 (VTAMIISGMTAVCISYCSGWC). At 263-269 (VRVTSST) the chain is on the cytoplasmic side. The chain crosses the membrane as a helical span at residues 270 to 290 (TYSMVGALNKLPIALSGLIFF). The Lumenal segment spans residues 291 to 294 (DAPK). The chain crosses the membrane as a helical span at residues 295 to 315 (NFLSIFSIFLGFLSGIVYAVA). Topologically, residues 316-330 (KQKKQQNPQPSAPIK) are cytoplasmic.

The protein belongs to the TPT transporter family. SLC35D subfamily. As to quaternary structure, homooligomer.

It localises to the golgi apparatus membrane. Its subcellular location is the cytoplasmic vesicle membrane. The protein localises to the endoplasmic reticulum membrane. In terms of biological role, involved in the import of GDP-mannose from the cytoplasm into the Golgi lumen. In Kluyveromyces lactis (strain ATCC 8585 / CBS 2359 / DSM 70799 / NBRC 1267 / NRRL Y-1140 / WM37) (Yeast), this protein is GDP-mannose transporter (VRG4).